Consider the following 144-residue polypeptide: Cell division protein SepF (144 aa).

Residues 14-31 (EDDEMNEVPYTESEEQQE) are compositionally biased toward acidic residues. Positions 14-41 (EDDEMNEVPYTESEEQQEEIPQTQKNER) are disordered.

Belongs to the SepF family. Homodimer. Interacts with FtsZ.

Its subcellular location is the cytoplasm. Its function is as follows. Cell division protein that is part of the divisome complex and is recruited early to the Z-ring. Probably stimulates Z-ring formation, perhaps through the cross-linking of FtsZ protofilaments. Its function overlaps with FtsA. This Lactobacillus johnsonii (strain CNCM I-12250 / La1 / NCC 533) protein is Cell division protein SepF.